Consider the following 376-residue polypeptide: Glutamate 5-kinase (376 aa).

K23 provides a ligand contact to ATP. The substrate site is built by S63, D150, and N162. Residues 182-183 and 222-228 each bind ATP; these read SD and TGGMASK. The 75-residue stretch at 284 to 358 folds into the PUA domain; it reads GGALRIDAGA…GKQTAQLPEG (75 aa).

Belongs to the glutamate 5-kinase family.

Its subcellular location is the cytoplasm. It carries out the reaction L-glutamate + ATP = L-glutamyl 5-phosphate + ADP. The protein operates within amino-acid biosynthesis; L-proline biosynthesis; L-glutamate 5-semialdehyde from L-glutamate: step 1/2. Its function is as follows. Catalyzes the transfer of a phosphate group to glutamate to form L-glutamate 5-phosphate. This Corynebacterium diphtheriae (strain ATCC 700971 / NCTC 13129 / Biotype gravis) protein is Glutamate 5-kinase.